A 463-amino-acid polypeptide reads, in one-letter code: RuvB-like helicase 2 (463 aa).

76–83 (GPPSTGKT) serves as a coordination point for ATP.

This sequence belongs to the RuvB family. In terms of assembly, may form heterododecamers with RVB1. Component of the SWR1 chromatin remodeling complex, the INO80 chromatin remodeling complex, and of the R2TP complex.

Its subcellular location is the nucleus. The enzyme catalyses ATP + H2O = ADP + phosphate + H(+). DNA helicase which participates in several chromatin remodeling complexes, including the SWR1 and the INO80 complexes. The SWR1 complex mediates the ATP-dependent exchange of histone H2A for the H2A variant HZT1 leading to transcriptional regulation of selected genes by chromatin remodeling. The INO80 complex remodels chromatin by shifting nucleosomes and is involved in DNA repair. Also involved in pre-rRNA processing. This is RuvB-like helicase 2 (RVB2) from Cryptococcus neoformans var. neoformans serotype D (strain JEC21 / ATCC MYA-565) (Filobasidiella neoformans).